Consider the following 127-residue polypeptide: Small ribosomal subunit protein uS13 (127 aa).

Residues 97–127 (PVRGQRTRTNARTRRGRRVTVAGKKKAPSKK) form a disordered region. A compositionally biased stretch (basic residues) spans 101–127 (QRTRTNARTRRGRRVTVAGKKKAPSKK).

It belongs to the universal ribosomal protein uS13 family. In terms of assembly, part of the 30S ribosomal subunit. Forms a loose heterodimer with protein S19. Forms two bridges to the 50S subunit in the 70S ribosome.

Functionally, located at the top of the head of the 30S subunit, it contacts several helices of the 16S rRNA. In the 70S ribosome it contacts the 23S rRNA (bridge B1a) and protein L5 of the 50S subunit (bridge B1b), connecting the 2 subunits; these bridges are implicated in subunit movement. Contacts the tRNAs in the A and P-sites. This is Small ribosomal subunit protein uS13 from Microcystis aeruginosa (strain NIES-843 / IAM M-2473).